The sequence spans 340 residues: UDP-N-acetylglucosamine--N-acetylmuramyl-(pentapeptide) pyrophosphoryl-undecaprenol N-acetylglucosamine transferase (340 aa).

UDP-N-acetyl-alpha-D-glucosamine-binding positions include 10-12, Asn-124, Ser-179, and Gln-277; that span reads TGG.

It belongs to the glycosyltransferase 28 family. MurG subfamily.

Its subcellular location is the cell inner membrane. The catalysed reaction is di-trans,octa-cis-undecaprenyl diphospho-N-acetyl-alpha-D-muramoyl-L-alanyl-D-glutamyl-meso-2,6-diaminopimeloyl-D-alanyl-D-alanine + UDP-N-acetyl-alpha-D-glucosamine = di-trans,octa-cis-undecaprenyl diphospho-[N-acetyl-alpha-D-glucosaminyl-(1-&gt;4)]-N-acetyl-alpha-D-muramoyl-L-alanyl-D-glutamyl-meso-2,6-diaminopimeloyl-D-alanyl-D-alanine + UDP + H(+). The protein operates within cell wall biogenesis; peptidoglycan biosynthesis. Functionally, cell wall formation. Catalyzes the transfer of a GlcNAc subunit on undecaprenyl-pyrophosphoryl-MurNAc-pentapeptide (lipid intermediate I) to form undecaprenyl-pyrophosphoryl-MurNAc-(pentapeptide)GlcNAc (lipid intermediate II). The polypeptide is UDP-N-acetylglucosamine--N-acetylmuramyl-(pentapeptide) pyrophosphoryl-undecaprenol N-acetylglucosamine transferase (Sulfurimonas denitrificans (strain ATCC 33889 / DSM 1251) (Thiomicrospira denitrificans (strain ATCC 33889 / DSM 1251))).